The primary structure comprises 341 residues: Phosphoribosylaminoimidazole-succinocarboxamide synthase, chloroplastic (341 aa).

The protein belongs to the SAICAR synthetase family.

It localises to the plastid. The protein resides in the chloroplast. It catalyses the reaction 5-amino-1-(5-phospho-D-ribosyl)imidazole-4-carboxylate + L-aspartate + ATP = (2S)-2-[5-amino-1-(5-phospho-beta-D-ribosyl)imidazole-4-carboxamido]succinate + ADP + phosphate + 2 H(+). It functions in the pathway purine metabolism; IMP biosynthesis via de novo pathway; 5-amino-1-(5-phospho-D-ribosyl)imidazole-4-carboxamide from 5-amino-1-(5-phospho-D-ribosyl)imidazole-4-carboxylate: step 1/2. This Vigna aconitifolia (Moth bean) protein is Phosphoribosylaminoimidazole-succinocarboxamide synthase, chloroplastic (PUR7).